A 630-amino-acid chain; its full sequence is Probable potassium transport system protein Kup 2 (630 aa).

The next 12 helical transmembrane spans lie at 17-37 (FWAL…TSPL), 56-76 (VIVL…VTAK), 108-128 (VFLM…SMIT), 145-165 (PALE…LFAF), 176-196 (AFGP…LIHI), 214-234 (FMLS…LAVT), 255-275 (WLFF…ALVL), 293-313 (FLVP…QAVI), 345-365 (IYLP…VLLF), 375-395 (YGIA…VVIW), 402-422 (PAAA…FFSA), and 427-447 (LLEG…LIWV).

It belongs to the HAK/KUP transporter (TC 2.A.72) family.

The protein resides in the cell inner membrane. It carries out the reaction K(+)(in) + H(+)(in) = K(+)(out) + H(+)(out). Functionally, transport of potassium into the cell. Likely operates as a K(+):H(+) symporter. The chain is Probable potassium transport system protein Kup 2 from Rhodopseudomonas palustris (strain BisB18).